Here is a 62-residue protein sequence, read N- to C-terminus: Large ribosomal subunit protein bL28 (62 aa).

This sequence belongs to the bacterial ribosomal protein bL28 family.

The sequence is that of Large ribosomal subunit protein bL28 from Acetivibrio thermocellus (strain ATCC 27405 / DSM 1237 / JCM 9322 / NBRC 103400 / NCIMB 10682 / NRRL B-4536 / VPI 7372) (Clostridium thermocellum).